The following is an 865-amino-acid chain: Taste receptor type 1 member 3 (865 aa).

The N-terminal stretch at 1-24 (MPGLALLGLTALLGLTALLDHGEG) is a signal peptide. The Extracellular portion of the chain corresponds to 25 to 573 (ATSCLSQQLR…FLAWGEPAVL (549 aa)). N-linked (GlcNAc...) asparagine glycosylation is found at N134 and N267. Residues 574–594 (LLLALLALALGLALAALGLFL) form a helical membrane-spanning segment. Over 595-606 (WHSDSPLVQASG) the chain is Cytoplasmic. A helical membrane pass occupies residues 607-627 (GPRACFGLACLGLVCLSVLLF). Over 628–642 (PGQPGPASCLAQQPL) the chain is Extracellular. The chain crosses the membrane as a helical span at residues 643–663 (FHLPLTGCLSTFFLQAAEIFV). Residues 664–685 (GSELPPSWAEKMRGRLRGPWAW) are Cytoplasmic-facing. Residues 686-706 (LVVLLAMLAEAALCAWYLVAF) form a helical membrane-spanning segment. The Extracellular portion of the chain corresponds to 707–732 (PPEVVTDWRVLPTEALVHCHVHSWIS). A helical membrane pass occupies residues 733-753 (FGLVHATNAMLAFLCFLGTFL). Residues 754–765 (VQSRPGRYNGAR) are Cytoplasmic-facing. A helical transmembrane segment spans residues 766 to 786 (GLTFAMLAYFITWISFVPLFA). Residues 787 to 794 (NVHVAYQP) lie on the Extracellular side of the membrane. A helical membrane pass occupies residues 795–815 (AVQMGTILLCALGILATFHLP). Topologically, residues 816-865 (KCYLLLQRPELNTPEFFLEDNARAQGSSWGQGRGESGQKQVTPDPVTSPQ) are cytoplasmic. Residues 840 to 865 (QGSSWGQGRGESGQKQVTPDPVTSPQ) form a disordered region. Polar residues predominate over residues 852-865 (GQKQVTPDPVTSPQ).

This sequence belongs to the G-protein coupled receptor 3 family. TAS1R subfamily. In terms of assembly, forms homodimers or a heterodimer with TAS1R1. Expressed in taste buds.

It is found in the cell membrane. Functionally, putative taste receptor. TAS1R1/TAS1R3 responds to the umami taste stimulus (the taste of monosodium glutamate). The sequence is that of Taste receptor type 1 member 3 (TAS1R3) from Felis catus (Cat).